Consider the following 580-residue polypeptide: Glypican-3 (580 aa).

The N-terminal stretch at methionine 1–alanine 24 is a signal peptide. Glutamine 25 bears the Pyrrolidone carboxylic acid mark. Cystine bridges form between cysteine 35–cysteine 72, cysteine 65–cysteine 262, cysteine 73–cysteine 265, cysteine 197–cysteine 349, cysteine 252–cysteine 285, cysteine 274–cysteine 422, and cysteine 278–cysteine 410. 2 N-linked (GlcNAc...) asparagine glycosylation sites follow: asparagine 124 and asparagine 241. The residue at position 352 (serine 352) is a Phosphoserine. An N-linked (GlcNAc...) asparagine glycan is attached at asparagine 418. Serine 495 and serine 509 each carry an O-linked (Xyl...) (glycosaminoglycan) serine glycan. Residue asparagine 554 is the site of GPI-anchor amidated asparagine attachment. The propeptide at leucine 555–histidine 580 is removed in mature form.

The protein belongs to the glypican family. In terms of assembly, heterodimer; disulfide-linked. Cleavage by a furin-like convertase results in production of alpha and beta chains which form a disulfide-linked heterodimer. Interacts with DPP4. Interacts with FGF2. Interacts with WNT5A. Also interacts with WNT3A and WNT7B. Interacts with hedgehog protein SHH; the heparan sulfate chains are not required for the interaction. Also interacts with hedgehog protein IHH. Interacts with CD81. Interacts with Wnt receptors FZD4, FZD7 and FZD8; the heparan sulfate chains are required for the interaction. O-glycosylated; contains heparan sulfate and/or chondroitin sulfate. In terms of processing, cleaved intracellularly by a furin-like convertase to generate 2 subunits, alpha and beta, which remain associated through disulfide bonds and are associated with the cell surface via the GPI-anchor. This processing is essential for its role in inhibition of hedgehog signaling. A second proteolytic event may result in cleavage of the protein on the cell surface, separating it from the GPI-anchor and leading to its shedding from the cell surface.

It is found in the cell membrane. Its function is as follows. Cell surface proteoglycan. Negatively regulates the hedgehog signaling pathway when attached via the GPI-anchor to the cell surface by competing with the hedgehog receptor PTC1 for binding to hedgehog proteins. Binding to the hedgehog protein SHH triggers internalization of the complex by endocytosis and its subsequent lysosomal degradation. Positively regulates the canonical Wnt signaling pathway by binding to the Wnt receptor Frizzled and stimulating the binding of the Frizzled receptor to Wnt ligands. Positively regulates the non-canonical Wnt signaling pathway. Binds to CD81 which decreases the availability of free CD81 for binding to the transcriptional repressor HHEX, resulting in nuclear translocation of HHEX and transcriptional repression. Inhibits the dipeptidyl peptidase activity of DPP4. Plays a role in limb patterning and skeletal development by controlling the cellular response to BMP4. Modulates the effects of growth factors BMP2, BMP7 and FGF7 on renal branching morphogenesis. Required for coronary vascular development. Plays a role in regulating cell movements during gastrulation. The sequence is that of Glypican-3 (GPC3) from Pan troglodytes (Chimpanzee).